Consider the following 187-residue polypeptide: Threonylcarbamoyl-AMP synthase (187 aa).

The YrdC-like domain maps to 4-187 (TLTLSEAVTA…DARSGHILRL (184 aa)).

Belongs to the SUA5 family. TsaC subfamily.

The protein resides in the cytoplasm. It catalyses the reaction L-threonine + hydrogencarbonate + ATP = L-threonylcarbamoyladenylate + diphosphate + H2O. Functionally, required for the formation of a threonylcarbamoyl group on adenosine at position 37 (t(6)A37) in tRNAs that read codons beginning with adenine. Catalyzes the conversion of L-threonine, HCO(3)(-)/CO(2) and ATP to give threonylcarbamoyl-AMP (TC-AMP) as the acyladenylate intermediate, with the release of diphosphate. This is Threonylcarbamoyl-AMP synthase from Xylella fastidiosa (strain 9a5c).